The chain runs to 466 residues: Uronate isomerase (466 aa).

The protein belongs to the metallo-dependent hydrolases superfamily. Uronate isomerase family.

It catalyses the reaction D-glucuronate = D-fructuronate. The catalysed reaction is aldehydo-D-galacturonate = keto-D-tagaturonate. The protein operates within carbohydrate metabolism; pentose and glucuronate interconversion. This chain is Uronate isomerase, found in Rhizorhabdus wittichii (strain DSM 6014 / CCUG 31198 / JCM 15750 / NBRC 105917 / EY 4224 / RW1) (Sphingomonas wittichii).